Here is a 322-residue protein sequence, read N- to C-terminus: Lipoyl synthase (322 aa).

Positions 61, 66, 72, 87, 91, 94, and 300 each coordinate [4Fe-4S] cluster. One can recognise a Radical SAM core domain in the interval 73 to 289; that stretch reads WDKKHATFMI…ETVAYTKGFL (217 aa).

Belongs to the radical SAM superfamily. Lipoyl synthase family. [4Fe-4S] cluster is required as a cofactor.

Its subcellular location is the cytoplasm. The catalysed reaction is [[Fe-S] cluster scaffold protein carrying a second [4Fe-4S](2+) cluster] + N(6)-octanoyl-L-lysyl-[protein] + 2 oxidized [2Fe-2S]-[ferredoxin] + 2 S-adenosyl-L-methionine + 4 H(+) = [[Fe-S] cluster scaffold protein] + N(6)-[(R)-dihydrolipoyl]-L-lysyl-[protein] + 4 Fe(3+) + 2 hydrogen sulfide + 2 5'-deoxyadenosine + 2 L-methionine + 2 reduced [2Fe-2S]-[ferredoxin]. Its pathway is protein modification; protein lipoylation via endogenous pathway; protein N(6)-(lipoyl)lysine from octanoyl-[acyl-carrier-protein]: step 2/2. Catalyzes the radical-mediated insertion of two sulfur atoms into the C-6 and C-8 positions of the octanoyl moiety bound to the lipoyl domains of lipoate-dependent enzymes, thereby converting the octanoylated domains into lipoylated derivatives. In Rhizobium meliloti (strain 1021) (Ensifer meliloti), this protein is Lipoyl synthase.